The sequence spans 217 residues: Phosphatidylserine decarboxylase proenzyme (217 aa).

Catalysis depends on Ser183, which acts as the Schiff-base intermediate with substrate; via pyruvic acid. Ser183 carries the post-translational modification Pyruvic acid (Ser); by autocatalysis.

This sequence belongs to the phosphatidylserine decarboxylase family. PSD-A subfamily. As to quaternary structure, heterodimer of a large membrane-associated beta subunit and a small pyruvoyl-containing alpha subunit. Pyruvate serves as cofactor. In terms of processing, is synthesized initially as an inactive proenzyme. Formation of the active enzyme involves a self-maturation process in which the active site pyruvoyl group is generated from an internal serine residue via an autocatalytic post-translational modification. Two non-identical subunits are generated from the proenzyme in this reaction, and the pyruvate is formed at the N-terminus of the alpha chain, which is derived from the carboxyl end of the proenzyme. The post-translation cleavage follows an unusual pathway, termed non-hydrolytic serinolysis, in which the side chain hydroxyl group of the serine supplies its oxygen atom to form the C-terminus of the beta chain, while the remainder of the serine residue undergoes an oxidative deamination to produce ammonia and the pyruvoyl prosthetic group on the alpha chain.

The protein localises to the cell membrane. The enzyme catalyses a 1,2-diacyl-sn-glycero-3-phospho-L-serine + H(+) = a 1,2-diacyl-sn-glycero-3-phosphoethanolamine + CO2. The protein operates within phospholipid metabolism; phosphatidylethanolamine biosynthesis; phosphatidylethanolamine from CDP-diacylglycerol: step 2/2. In terms of biological role, catalyzes the formation of phosphatidylethanolamine (PtdEtn) from phosphatidylserine (PtdSer). This chain is Phosphatidylserine decarboxylase proenzyme, found in Cupriavidus pinatubonensis (strain JMP 134 / LMG 1197) (Cupriavidus necator (strain JMP 134)).